We begin with the raw amino-acid sequence, 739 residues long: MLLTTEPTATQIRDERIYATMGLSDDEYALVVSLLGREPNYTEIGLFSVMWSEHCSYKNSKPVLRKFPTTGKHVLQGPGEGAGIVDIGDGQAVAFKIESHNHPSAIEPYQGAATGVGGIIRDIFSMGARPIALLNSLRFGDLNESRVKHLFGHVVSGIAGYGNCVGIPTVGGEVAFDPAYSGNPLVNAMCVGFIRHEDIQKGIAEGVGNSVMYVGATTGRDGIHGATFASEELGEDADEKRPAVQVGDPFMEKLLIEACLEVIKHPALVGIQDMGAAGLTSSSAEMASKAGMGIEMNLDLVPQRETGMTPYEMMLSESQERMLLVVKAGHEDEIEAIVTKWGLHAIKVGEVIEEKVLRLVHQGEVAAEVPVDALAEDAPVYHKPSKVPAYYEAFQAMEPVTPIVEDMMATWKDVLAMPSIASKRWVYEQYDHMVQTSTVVAPGSDAAVIRIRETEKSLAMTTDCNAKYVYLDPRVGGAIAVAEAARNIVASGAEPLALTDCLNFGSPDKPEGFWQLDQAVEGMAEACRTLDTPVIGGNVSLYNESNGQAIYPTPVVGMVGLIEKPEHITTSFAKQAGDVVFLLGETKAEFGGSALQMLQDGKVSGHAPTLDLENERQTQKVLLHAIREGLVTAAHDVSEGGLAAALPELVFGTGFGVDVTIDTDLVTALFSESQSRFLVTVDKAHAEAFARMTNGTAIGTVTEASTLVVRASDRLIEMDVQELERVWEGAIPCYMTSEA.

His-54 is an active-site residue. 2 residues coordinate ATP: Tyr-57 and Lys-96. Position 98 (Glu-98) interacts with Mg(2+). Residues 99–102 and Arg-121 each bind substrate; that span reads SHNH. Catalysis depends on His-100, which acts as the Proton acceptor. Asp-122 lines the Mg(2+) pocket. Gln-245 contributes to the substrate binding site. Asp-273 contributes to the Mg(2+) binding site. Residue 317–319 participates in substrate binding; the sequence is ESQ. Asp-500 and Gly-537 together coordinate ATP. Asn-538 contributes to the Mg(2+) binding site. Substrate is bound at residue Ser-540.

The protein belongs to the FGAMS family. Monomer. Part of the FGAM synthase complex composed of 1 PurL, 1 PurQ and 2 PurS subunits.

The protein resides in the cytoplasm. It catalyses the reaction N(2)-formyl-N(1)-(5-phospho-beta-D-ribosyl)glycinamide + L-glutamine + ATP + H2O = 2-formamido-N(1)-(5-O-phospho-beta-D-ribosyl)acetamidine + L-glutamate + ADP + phosphate + H(+). Its pathway is purine metabolism; IMP biosynthesis via de novo pathway; 5-amino-1-(5-phospho-D-ribosyl)imidazole from N(2)-formyl-N(1)-(5-phospho-D-ribosyl)glycinamide: step 1/2. Functionally, part of the phosphoribosylformylglycinamidine synthase complex involved in the purines biosynthetic pathway. Catalyzes the ATP-dependent conversion of formylglycinamide ribonucleotide (FGAR) and glutamine to yield formylglycinamidine ribonucleotide (FGAM) and glutamate. The FGAM synthase complex is composed of three subunits. PurQ produces an ammonia molecule by converting glutamine to glutamate. PurL transfers the ammonia molecule to FGAR to form FGAM in an ATP-dependent manner. PurS interacts with PurQ and PurL and is thought to assist in the transfer of the ammonia molecule from PurQ to PurL. The protein is Phosphoribosylformylglycinamidine synthase subunit PurL of Exiguobacterium sp. (strain ATCC BAA-1283 / AT1b).